Reading from the N-terminus, the 309-residue chain is Ribonuclease Z (309 aa).

Histidine 63, histidine 65, aspartate 67, histidine 68, histidine 145, aspartate 216, and histidine 274 together coordinate Zn(2+). Residue aspartate 67 is the Proton acceptor of the active site.

It belongs to the RNase Z family. In terms of assembly, homodimer. Requires Zn(2+) as cofactor.

It catalyses the reaction Endonucleolytic cleavage of RNA, removing extra 3' nucleotides from tRNA precursor, generating 3' termini of tRNAs. A 3'-hydroxy group is left at the tRNA terminus and a 5'-phosphoryl group is left at the trailer molecule.. Its function is as follows. Zinc phosphodiesterase, which displays some tRNA 3'-processing endonuclease activity. Probably involved in tRNA maturation, by removing a 3'-trailer from precursor tRNA. This chain is Ribonuclease Z, found in Streptococcus thermophilus (strain CNRZ 1066).